Consider the following 850-residue polypeptide: DEAD-box ATP-dependent RNA helicase 26 (850 aa).

2 disordered regions span residues 60–82 and 106–350; these read TRPE…IRAS and GKFT…ENDE. Residues 61 to 71 are compositionally biased toward basic and acidic residues; that stretch reads RPERSQPEFAR. Residue Thr109 is modified to Phosphothreonine. At Ser110 the chain carries Phosphoserine. 2 stretches are compositionally biased toward basic and acidic residues: residues 118-140 and 284-299; these read EVVR…EGQS and GRND…REPG. Composition is skewed to acidic residues over residues 315 to 325 and 336 to 350; these read LEEEDSSDDDE and LPSE…ENDE. The short motif at 382-410 is the Q motif element; sequence TRFDQFPLSPLSLKAIKDAGFETMTVVQE. Positions 413–596 constitute a Helicase ATP-binding domain; the sequence is LPIILQGKDV…HVALKRDHEF (184 aa). 426-433 contacts ATP; that stretch reads AKTGTGKT. The short motif at 544 to 547 is the DEAD box element; it reads DEAD. The Helicase C-terminal domain maps to 630 to 777; it reads LLKEHIADNV…IDPEAVKRVQ (148 aa).

It belongs to the DEAD box helicase family.

It carries out the reaction ATP + H2O = ADP + phosphate + H(+). This chain is DEAD-box ATP-dependent RNA helicase 26 (RH26), found in Arabidopsis thaliana (Mouse-ear cress).